The sequence spans 331 residues: Ferrochelatase (331 aa).

His187 and Glu286 together coordinate Fe cation.

This sequence belongs to the ferrochelatase family.

The protein localises to the cytoplasm. The enzyme catalyses heme b + 2 H(+) = protoporphyrin IX + Fe(2+). It functions in the pathway porphyrin-containing compound metabolism; protoheme biosynthesis; protoheme from protoporphyrin-IX: step 1/1. Functionally, catalyzes the ferrous insertion into protoporphyrin IX. This is Ferrochelatase from Legionella pneumophila (strain Paris).